The sequence spans 278 residues: Large ribosomal subunit protein uL2 (278 aa).

2 disordered regions span residues 1-58 and 225-278; these read MAIR…GGGH and VMNP…KNKR. The segment covering 37-58 has biased composition (basic residues); the sequence is LHGRGGRNAHGRITTRHKGGGH. The span at 253-267 shows a compositional bias: basic and acidic residues; it reads PEGRTRKNKASDKMI. Residues 268-278 are compositionally biased toward basic residues; sequence VRRRRTGKNKR.

This sequence belongs to the universal ribosomal protein uL2 family. Part of the 50S ribosomal subunit. Forms a bridge to the 30S subunit in the 70S ribosome.

Functionally, one of the primary rRNA binding proteins. Required for association of the 30S and 50S subunits to form the 70S ribosome, for tRNA binding and peptide bond formation. It has been suggested to have peptidyltransferase activity; this is somewhat controversial. Makes several contacts with the 16S rRNA in the 70S ribosome. This is Large ribosomal subunit protein uL2 from Rhodococcus erythropolis (strain PR4 / NBRC 100887).